Reading from the N-terminus, the 357-residue chain is Peptide chain release factor 1 (357 aa).

Position 234 is an N5-methylglutamine (glutamine 234). Positions 249 to 308 (PSGVEVSCQDEKSQHKNRSKAMRVLRSRVYEKKREEQQAEREEARRSMVGSGDRSAKIRT) are disordered. Basic residues predominate over residues 263–274 (HKNRSKAMRVLR). Over residues 276-294 (RVYEKKREEQQAEREEARR) the composition is skewed to basic and acidic residues.

The protein belongs to the prokaryotic/mitochondrial release factor family. Methylated by PrmC. Methylation increases the termination efficiency of RF1.

It is found in the cytoplasm. Peptide chain release factor 1 directs the termination of translation in response to the peptide chain termination codons UAG and UAA. The chain is Peptide chain release factor 1 from Salinibacter ruber (strain DSM 13855 / M31).